We begin with the raw amino-acid sequence, 578 residues long: Rhoptry protein 4 (578 aa).

Residues 1–33 form the signal peptide; that stretch reads MGHPTSFGQPSCLVWLAAAFLVLGLCLVQQGAG. Residues 56–82 are disordered; it reads VDKYSRDSTEGENTVSEGEAEGSRGGS. In terms of domain architecture, Protein kinase spans 259–546; that stretch reads LVRGRRIGLF…ALQAIETPEY (288 aa). A disordered region spans residues 559 to 578; the sequence is LYSGDGTLTGGDDDMPPLET. Positions 569 to 578 are enriched in acidic residues; sequence GDDDMPPLET.

In terms of processing, phosphorylated on multiple serine and threonine residues in parasitic extracts and infected cells but not in extracellular parasites.

The protein resides in the secreted. It is found in the parasitophorous vacuole membrane. Functionally, thought to play a role in parasitophorous vacuole membrane function during the infection of host organisms. This chain is Rhoptry protein 4, found in Toxoplasma gondii.